Reading from the N-terminus, the 214-residue chain is Ceramide-1-phosphate transfer protein (214 aa).

Residues D56, K60, R106, R110, and H150 each contribute to the an N-acylsphingoid base 1-phosphate site.

This sequence belongs to the GLTP family.

Its subcellular location is the cytoplasm. The protein localises to the cytosol. It localises to the golgi apparatus. It is found in the trans-Golgi network membrane. The protein resides in the cell membrane. Its subcellular location is the endosome membrane. The protein localises to the nucleus outer membrane. The enzyme catalyses N-(hexadecanoyl)-sphing-4-enine-1-phosphate(in) = N-(hexadecanoyl)-sphing-4-enine-1-phosphate(out). It catalyses the reaction N-(9Z-octadecenoyl)-sphing-4-enine-1-phosphate(in) = N-(9Z-octadecenoyl)-sphing-4-enine-1-phosphate(out). In terms of biological role, mediates the intracellular transfer of ceramide-1-phosphate (C1P) between organelle membranes and the cell membrane. Required for normal structure of the Golgi stacks. Can bind phosphoceramides with a variety of aliphatic chains, but has a preference for lipids with saturated C16:0 or monounsaturated C18:1 aliphatic chains, and is inefficient with phosphoceramides containing lignoceryl (C24:0). Plays a role in the regulation of the cellular levels of ceramide-1-phosphate, and thereby contributes to the regulation of phospholipase PLA2G4A activity and the release of arachidonic acid. Has no activity with galactosylceramide, lactosylceramide, sphingomyelin, phosphatidylcholine, phosphatidic acid and ceramide. C1P transfer is stimulated by phosphatidylserine in C1P source vesicles. Regulates autophagy, inflammasome mediated IL1B and IL18 processing, and pyroptosis, but not apoptosis. This Bos taurus (Bovine) protein is Ceramide-1-phosphate transfer protein (CPTP).